Consider the following 336-residue polypeptide: Ornithine carbamoyltransferase, catabolic (336 aa).

Residues S62–T65, Q89, R113, and H140–Q143 each bind carbamoyl phosphate. Residues N172, D236, and S240 to M241 each bind L-ornithine. Carbamoyl phosphate contacts are provided by residues C277–L278 and R322.

It belongs to the aspartate/ornithine carbamoyltransferase superfamily. OTCase family.

It is found in the cytoplasm. The catalysed reaction is carbamoyl phosphate + L-ornithine = L-citrulline + phosphate + H(+). The protein operates within amino-acid degradation; L-arginine degradation via ADI pathway; carbamoyl phosphate from L-arginine: step 2/2. In terms of biological role, reversibly catalyzes the transfer of the carbamoyl group from carbamoyl phosphate (CP) to the N(epsilon) atom of ornithine (ORN) to produce L-citrulline. The protein is Ornithine carbamoyltransferase, catabolic of Staphylococcus aureus (strain MRSA252).